The following is a 121-amino-acid chain: Small ribosomal subunit protein uS13 (121 aa).

Residues 98–121 (RGQKTRNNAHTVKGKPKSIAGKKK) are disordered. A compositionally biased stretch (basic residues) spans 109–121 (VKGKPKSIAGKKK).

Belongs to the universal ribosomal protein uS13 family. In terms of assembly, part of the 30S ribosomal subunit. Forms a loose heterodimer with protein S19. Forms two bridges to the 50S subunit in the 70S ribosome.

In terms of biological role, located at the top of the head of the 30S subunit, it contacts several helices of the 16S rRNA. In the 70S ribosome it contacts the 23S rRNA (bridge B1a) and protein L5 of the 50S subunit (bridge B1b), connecting the 2 subunits; these bridges are implicated in subunit movement. Contacts the tRNAs in the A and P-sites. The chain is Small ribosomal subunit protein uS13 from Phytoplasma australiense.